A 458-amino-acid chain; its full sequence is Transmembrane protein adipocyte-associated 1 homolog (458 aa).

Residues Asn21 and Asn45 are each glycosylated (N-linked (GlcNAc...) asparagine). The next 7 helical transmembrane spans lie at 81–101 (VILV…GSVI), 114–134 (AFTL…AYSM), 152–172 (IIIK…GLLF), 181–201 (ILIA…VQVI), 225–245 (FLFW…IMCL), 263–283 (LIYC…AALI), and 291–311 (LCFV…IIYF). Asn323 and Asn324 each carry an N-linked (GlcNAc...) asparagine glycan. The tract at residues 409–458 (RTGSDDYAHHRDSMLSEPSTGTTTRHLKGLGPQGSLVFEDDPSSLTSLRM) is disordered. Residues 411–422 (GSDDYAHHRDSM) show a composition bias toward basic and acidic residues.

The protein belongs to the UPF0359 family.

It is found in the membrane. The protein is Transmembrane protein adipocyte-associated 1 homolog (tpra-1) of Caenorhabditis elegans.